Consider the following 92-residue polypeptide: MRLFIFLLVAVLLLFQYDFWFGKNGYLDYKRTAQQIAQHKQENEKLSQRNQVVAAEIKDLKQGVEAIEERARFQHDMVKPDEIFYHIVKEQK.

The Cytoplasmic segment spans residues 1–3 (MRL). The chain crosses the membrane as a helical span at residues 4–21 (FIFLLVAVLLLFQYDFWF). The Periplasmic segment spans residues 22–92 (GKNGYLDYKR…IFYHIVKEQK (71 aa)). A coiled-coil region spans residues 26 to 74 (YLDYKRTAQQIAQHKQENEKLSQRNQVVAAEIKDLKQGVEAIEERARFQ).

Belongs to the FtsB family. As to quaternary structure, part of a complex composed of FtsB, FtsL and FtsQ.

It localises to the cell inner membrane. Functionally, essential cell division protein. May link together the upstream cell division proteins, which are predominantly cytoplasmic, with the downstream cell division proteins, which are predominantly periplasmic. The protein is Cell division protein FtsB of Pasteurella multocida (strain Pm70).